Here is a 247-residue protein sequence, read N- to C-terminus: 5-oxoprolinase subunit A (247 aa).

This sequence belongs to the LamB/PxpA family. Forms a complex composed of PxpA, PxpB and PxpC.

It carries out the reaction 5-oxo-L-proline + ATP + 2 H2O = L-glutamate + ADP + phosphate + H(+). Its function is as follows. Catalyzes the cleavage of 5-oxoproline to form L-glutamate coupled to the hydrolysis of ATP to ADP and inorganic phosphate. In Vibrio vulnificus (strain YJ016), this protein is 5-oxoprolinase subunit A.